The following is a 623-amino-acid chain: Cilia- and flagella-associated protein 52 (623 aa).

WD repeat units lie at residues 65 to 109 (GHGN…LMAR), 112 to 153 (LHKG…AICG), 159 to 198 (LNVG…RKIW), 291 to 330 (QLQG…ETLI), 333 to 372 (CHFE…ELLR), 375 to 414 (VPNM…LMYV), 418 to 457 (AHRI…QKLE), 462 to 501 (EHKS…RNQM), 503 to 544 (LANT…RELD), 546 to 585 (SLSG…VTHV), and 588 to 623 (GHSG…PFPS).

Belongs to the CFAP52 family. In terms of assembly, microtubule inner protein component of sperm flagellar doublet microtubules. Interacts with BRCA2. Interacts with the CCT chaperonin complex. Interacts with HSP70. Interacts with AK8. Interacts with CFAP45. Interacts with DNAI1. Interacts with IQDC. As to expression, expressed in trachea multiciliated cells.

It is found in the cytoplasm. Its subcellular location is the cytoskeleton. It localises to the cilium axoneme. The protein localises to the flagellum axoneme. Functionally, microtubule inner protein (MIP) part of the dynein-decorated doublet microtubules (DMTs) in cilia axoneme. Important for proper ciliary and flagellar beating. May act in cooperation with CFAP45 and axonemal dynein subunit DNAH11. May play a role in cell growth and/or survival. The protein is Cilia- and flagella-associated protein 52 (CFAP52) of Bos taurus (Bovine).